Here is a 192-residue protein sequence, read N- to C-terminus: Pyridoxal 5'-phosphate synthase subunit PdxT (192 aa).

47 to 49 (GES) contacts L-glutamine. The active-site Nucleophile is C79. L-glutamine contacts are provided by residues R106 and 134–135 (IR). Catalysis depends on charge relay system residues H170 and E172.

The protein belongs to the glutaminase PdxT/SNO family. As to quaternary structure, in the presence of PdxS, forms a dodecamer of heterodimers. Only shows activity in the heterodimer.

It catalyses the reaction aldehydo-D-ribose 5-phosphate + D-glyceraldehyde 3-phosphate + L-glutamine = pyridoxal 5'-phosphate + L-glutamate + phosphate + 3 H2O + H(+). It carries out the reaction L-glutamine + H2O = L-glutamate + NH4(+). Its pathway is cofactor biosynthesis; pyridoxal 5'-phosphate biosynthesis. Catalyzes the hydrolysis of glutamine to glutamate and ammonia as part of the biosynthesis of pyridoxal 5'-phosphate. The resulting ammonia molecule is channeled to the active site of PdxS. This is Pyridoxal 5'-phosphate synthase subunit PdxT from Geobacillus sp. (strain WCH70).